The following is a 363-amino-acid chain: Aminomethyltransferase (363 aa).

It belongs to the GcvT family. As to quaternary structure, the glycine cleavage system is composed of four proteins: P, T, L and H.

The enzyme catalyses N(6)-[(R)-S(8)-aminomethyldihydrolipoyl]-L-lysyl-[protein] + (6S)-5,6,7,8-tetrahydrofolate = N(6)-[(R)-dihydrolipoyl]-L-lysyl-[protein] + (6R)-5,10-methylene-5,6,7,8-tetrahydrofolate + NH4(+). Functionally, the glycine cleavage system catalyzes the degradation of glycine. The protein is Aminomethyltransferase of Dechloromonas aromatica (strain RCB).